A 705-amino-acid polypeptide reads, in one-letter code: Elongation factor G (705 aa).

The region spanning 8–289 (VNYRNIGISA…TVINYLPSPK (282 aa)) is the tr-type G domain. Residues 17–24 (AHIDAGKT), 88–92 (DTPGH), and 142–145 (NKMD) each bind GTP.

Belongs to the TRAFAC class translation factor GTPase superfamily. Classic translation factor GTPase family. EF-G/EF-2 subfamily.

Its subcellular location is the cytoplasm. In terms of biological role, catalyzes the GTP-dependent ribosomal translocation step during translation elongation. During this step, the ribosome changes from the pre-translocational (PRE) to the post-translocational (POST) state as the newly formed A-site-bound peptidyl-tRNA and P-site-bound deacylated tRNA move to the P and E sites, respectively. Catalyzes the coordinated movement of the two tRNA molecules, the mRNA and conformational changes in the ribosome. The chain is Elongation factor G from Wigglesworthia glossinidia brevipalpis.